A 732-amino-acid polypeptide reads, in one-letter code: MSETFPETNTPVQTPSTESFVNKMNAGDKTIGNNIFSQDSDSNQQSSHQEPLSPPNPSPTPEKRQLDDEVDNSIEPESKKQKVEEETEASQTGVIQTEVSETVPEIESSVNKDSEPVNGVSEESENTNNEQEKPQEEAPEENPQEEVPEAKPQEEASGENPQEIPNDKPQDDEPDIQEVDPPKPVVPVFTEPAPKPPQEPDMNNLPENPIPQHQAKFVLNTIKAVKRNREAVPFLHPVDTVKLNVPFYYNYIPRPMDLSTIERKINLKAYEDVSQVVDDFNLMVKNCKKFNGEAAGISKMATNIQAQFEKLMVKVPPKELPAGTNVAEATSVATSPTTNKRKSVAESSSSHQHRDSVAAARPKRTIHPPKSKELPYETKPKNKKVAAELRFCNQTIKELMSKKHYNYNFPFLAPVDTVALNIPNYNEIVKQPMDLGTIQSKLANNEYENADDFEKDVRLVFKNCYLFNPEGTDVNMMGHRLEAVFDKKWANKPVPEPTPQNSDVSDREYSSEEEDNVEISEAMLSEIPAIQVMENQIIRMRKELDELKKEHLKKLREQQAARKKKKQQKGKRRAPKAKHTKDTQHQVQAPPEPPKLTPPQPVVTYEMKKQVSEMVPNLSDKKLNALIKIIQDDVQISNDDEVELDMDQLEDRTVLKLYDFLFGDKALKNSAGKKKKPVANNNLDELAHLRSQLALFDEGVNGQQGSDNGFMKVVNQEESSEDEASSESSEEE.

A compositionally biased stretch (polar residues) spans 1 to 22 (MSETFPETNTPVQTPSTESFVN). 5 disordered regions span residues 1 to 207 (MSET…NLPE), 324 to 380 (TNVA…ETKP), 491 to 517 (NKPV…EDNV), 556 to 600 (REQQ…TPPQ), and 700 to 732 (VNGQ…SEEE). Residues 37 to 51 (SQDSDSNQQSSHQEP) are compositionally biased toward low complexity. Over residues 89-100 (ASQTGVIQTEVS) the composition is skewed to polar residues. Positions 137–147 (EAPEENPQEEV) are enriched in acidic residues. A Bromo 1 domain is found at 206 to 315 (PENPIPQHQA…AQFEKLMVKV (110 aa)). Polar residues predominate over residues 327–338 (AEATSVATSPTT). Over residues 370-380 (KSKELPYETKP) the composition is skewed to basic and acidic residues. A Bromo 2 domain is found at 383–492 (KKVAAELRFC…AVFDKKWANK (110 aa)). A coiled-coil region spans residues 529-569 (AIQVMENQIIRMRKELDELKKEHLKKLREQQAARKKKKQQK). Residues 561 to 579 (ARKKKKQQKGKRRAPKAKH) show a composition bias toward basic residues. The segment covering 590-600 (PPEPPKLTPPQ) has biased composition (pro residues). The NET domain occupies 593-672 (PPKLTPPQPV…GDKALKNSAG (80 aa)). Residues 718-732 (ESSEDEASSESSEEE) show a composition bias toward acidic residues.

This sequence belongs to the BET family.

It localises to the nucleus. Functionally, transcription factor involved in the expression of a broad class of genes including snRNAs. Required for sporulation and DNA-damage repair. Prevents the spreading of SIR silencing at telomeres and protects histone H4, but not H3, from deacetylation. The chain is Bromodomain-containing factor 1 (BDF1) from Candida albicans (strain SC5314 / ATCC MYA-2876) (Yeast).